We begin with the raw amino-acid sequence, 354 residues long: MRFRCYLIFSIFSDSLLGAGFFQGGKRAMVVSTPIAAEEKPPIQANVVETWEISKIYRTGFWMNQKVESLKPLSIAVQQGETFGLLGPNGAGKTTLLKILLGVIRASGGRGTLLGKPIGDRQTKQRVGYLPENAYFYDFLTAWEFLDYIGSLFQIGKQERQRRILAMCDLVGLAQKTAKKKQLRQYSKGMLQRVGMAQALINDPEVVFLDEPMSGLDPLGRYQVREIILSLKEQGKTIFFNSHILADVEQICDRIAILARGELLCSGSLAEVLGNDEGYEVVLKGGEEEALGKYLANLSQEQDVWHGHYQGDVQALVDALPSLNARLISMNLARPSLEDYFIRQLRERGITTSQ.

The ABC transporter domain maps to 48-285; the sequence is VETWEISKIY…DEGYEVVLKG (238 aa). 87–94 serves as a coordination point for ATP; that stretch reads GPNGAGKT.

It belongs to the ABC transporter superfamily.

This is an uncharacterized protein from Synechocystis sp. (strain ATCC 27184 / PCC 6803 / Kazusa).